The chain runs to 156 residues: Small ribosomal subunit protein uS7 (156 aa).

The protein belongs to the universal ribosomal protein uS7 family. Part of the 30S ribosomal subunit. Contacts proteins S9 and S11.

One of the primary rRNA binding proteins, it binds directly to 16S rRNA where it nucleates assembly of the head domain of the 30S subunit. Is located at the subunit interface close to the decoding center, probably blocks exit of the E-site tRNA. In Bacillus cereus (strain B4264), this protein is Small ribosomal subunit protein uS7.